A 940-amino-acid chain; its full sequence is MTAEQRRNLHAFGDYVRKTLDPTFILSYMAPWFRDDEVQHIQAEKNNKGPTEAASLFLQFLLELQEEGWFRGFLDALNQAGYCGLCEAIESWDFQKIEKLEEYRSLLRRLQPEFKTTINPKDILPEIAECLISQECEEILQICSSKGLMAGAEKMVECLLRSDKENWPKTLKLALEKEESRFSELWMVDKGAEDVKMKDLEDDEMKTCDVQIFYKEEPENQNLSQNSCSSSAPHTYSPLKPRKYQLELALPAQNGKNTIICAPTGCGKTFVSLLICEHHLKKFPRGRKGKVVFFAIQLPVYEQQKSVFSKHFERLGYKVAGISGATSDTVCVEQIVENSDIIILTPQILVNCLTNGTIPSLSVFTLMIFDECHNTSKQHPYNVIMFSYLDRKLGGSSDSLPQVIGLTASVGVGDAKNKAEATEYICKLCASLDTSVIATVRDNLEELEEVVYKPQKFFRKVELRTTDRFKCIISQLMMEIESLAKSIFEELGTITLGGLFQIQNSNFGTQKYEQWIVKVQKECAVFQMPDKDKESRICKALFSYMSHLRIYNDALIINEHARMKDALDYLKDFFRNIRAAGFDEIEQDLTQRFEEKLQELESISIDPSNENPKLRDLCFILQEEYHLNPETRTILFVKTRALVDALKKWIKENPKLSFLKPSILTGRGKTNQNIGMTLPAQKCVLDTFRTDKDNKILITTSVADEGIDIAQCNLVILYEYVGNVIKMIQTRGRGRARGSKCFLLTANADLIDKEKMNMYKEEMMNGAILILQTWDEAVFKEKIHQIQIREKIIRDNQGKPEPVPDKKTKKLLCKKCKAFACYTADIRMVEKCHFTVVGDAFRERFVSKLHPKPKSFGNIEKRAKIYCARPDCSHDWGIYVRYKAFEMPFIKIESFVVEDIATGVQTVHAKWKDFNFEKLSFDAAEMAGGAQDLGLQGMGN.

CARD domains are found at residues 1-87 (MTAE…GLCE) and 92-172 (WDFQ…KTLK). Residues Lys48, Lys96, Lys154, Lys164, Lys172, and Lys190 each participate in a glycyl lysine isopeptide (Lys-Gly) (interchain with G-Cter in ubiquitin) cross-link. The segment at 219 to 928 (ENQNLSQNSC…LSFDAAEMAG (710 aa)) is interaction with ZC3HAV1. One can recognise a Helicase ATP-binding domain in the interval 249 to 428 (ALPAQNGKNT…AEATEYICKL (180 aa)). 262–269 (APTGCGKT) contributes to the ATP binding site. Residues 370-373 (DECH) carry the DECH box motif. Positions 613–779 (KLRDLCFILQ…ILQTWDEAVF (167 aa)) constitute a Helicase C-terminal domain. Residues 738–928 (GSKCFLLTAN…LSFDAAEMAG (191 aa)) form a mediates interaction with RNF135 region. Thr773 bears the Phosphothreonine; by CK2 mark. The RLR CTR domain occupies 795-928 (DNQGKPEPVP…LSFDAAEMAG (134 aa)). Zn(2+) is bound at residue Cys813. Residue Lys815 forms a Glycyl lysine isopeptide (Lys-Gly) (interchain with G-Cter in ubiquitin) linkage. Zn(2+) is bound at residue Cys816. Residue Lys861 is modified to N6-acetyllysine. Zn(2+) contacts are provided by Cys867 and Cys872. The residue at position 912 (Lys912) is an N6-acetyllysine.

It belongs to the helicase family. RLR subfamily. In terms of assembly, monomer; maintained as a monomer in an autoinhibited state. Upon binding of viral RNAs and conformational shift, homooligomerizes and forms filaments on these molecules. Interacts (via tandem CARD domain) with MAVS/IPS1 promoting its filamentation. Interacts with DHX58/LGP2, IKBKE, TBK1 and STING1. Interacts (via CARD domain) with TRIM25 (via SPRY domain). Interacts (double-stranded RNA-bound oligomeric form) with RNF135 (homodimer); involved in RNA length-dependent activation of the RIG-I signaling pathway. Interacts with CYLD. Interacts with NLRC5; blocks the interaction of MAVS/IPS1 to RIGI. Interacts with SRC. Interacts with DDX60. Interacts with ZC3HAV1 (via zinc-fingers) in an RNA-dependent manner. Interacts (via tandem CARD domain) with SEC14L1; the interaction is direct and impairs the interaction of RIGI with MAVS/IPS1. Interacts with VCP/p97; interaction is direct and allows the recruitment of RNF125 and subsequent ubiquitination and degradation. Interacts with NOP53; may regulate RIGI through USP15-mediated 'Lys-63'-linked deubiquitination. Interacts with SIGLEC10, CBL and PTPN11; within a negative feedback loop leading to RIGI degradation. Interacts with LRRC25. Interacts with ZCCHC3; leading to activation of RIGI. Interacts with RNF123. Interacts with UBE2D3 and UBE2N; E2 ubiquitin ligases involved in RNF135-mediated ubiquitination of RIGI and activation of the RIG-I signaling pathway. Interacts with IFIT3. Interacts with DDX3X. Interacts with RTN3. Interacts with ARL16; this interaction is GTP-dependent and induced upon viral infection; this interaction suppresses the RNA sensing activity of RIGI. Interacts with DHX16; this interaction enhances RIGI-mediated antiviral response. Interacts with IRGM; promoting RIGI degradation. Interacts with IFI6; this interaction inhibits RIGI activation. Interacts with ECSIT; this interaction bridges RIGI to the MAVS complex at the mitochondrion. Interacts with YWHAE; this interaction drives RIGI at the mitochondrion. Post-translationally, phosphorylated in resting cells and dephosphorylated in RNA virus-infected cells. Phosphorylation at Thr-773 results in inhibition of its activity while dephosphorylation at these sites results in its activation. ISGylated. Conjugated to ubiquitin-like protein ISG15 upon IFN-beta stimulation. ISGylation negatively regulates its function in antiviral signaling response. In terms of processing, sumoylated, probably by MUL1; inhibiting its polyubiquitination. Post-translationally, acetylated in response to RNA virus infection. Deacetylated by HDAC6 in the presence of viral mRNAs which is required for detection of viral RNA by RIGI. Ubiquitinated. 'Lys-63' ubiquitination by RNF135, which occurs after RNA-binding and homodimerization, releases the autoinhibition of the CARD domains by the RLR CTR domain, an essential step in the activation of the RIG-I signaling pathway. Also ubiquitinated by TRIM4. Also undergoes 'Lys-48' ubiquitination by RNF125 that leads to proteasomal degradation. 'Lys-48' ubiquitination follows viral infection and is enhanced by 'Lys-63'-linked ubiquitination of the CARD domains that promotes interaction with VCP/p97 and subsequent recruitment of RNF125. Within a negative feedback loop involving SIGLEC10 and PTPN11, 'Lys-48' ubiquitination at Lys-815 by CBL also elicits the proteasomal degradation of RIGI. Deubiquitinated by CYLD, a protease that selectively cleaves 'Lys-63'-linked ubiquitin chains. Also probably deubiquitinated by USP17L2/USP17 that cleaves 'Lys-48'- and 'Lys-63'-linked ubiquitin chains and positively regulates the receptor. Ubiquitinated by TRIM40 via 'Lys-48'-linked ubiquitination; leading to proteasomal degradation. Deubiquitinated by USP27X that cleaves 'Lys-63'-linked ubiquitin chains and inhibits the innate immune receptor activity. Deubiquitinated by USP3 that also cleaves 'Lys-63'-linked ubiquitin chains and inhibits the innate immune receptor activity. In terms of processing, degraded via selective autophagy following interaction with IRGM. IRGM promotes RIGI recruitment to autophagosome membranes, promoting its SQSTM1/p62-dependent autophagic degradation. Ubiquitously expressed, with highest levels in spleen, liver, intestine and heart. Up-regulated in tracheobronchial lymph node and tonsils during porcine reproductive and respiratory syndrome virus (PRRSV) infection.

The protein resides in the cytoplasm. It localises to the cell projection. It is found in the ruffle membrane. The protein localises to the cytoskeleton. Its subcellular location is the cell junction. The protein resides in the tight junction. The enzyme catalyses ATP + H2O = ADP + phosphate + H(+). Its function is as follows. Innate immune receptor that senses cytoplasmic viral nucleic acids and activates a downstream signaling cascade leading to the production of type I interferons and pro-inflammatory cytokines. Forms a ribonucleoprotein complex with viral RNAs on which it homooligomerizes to form filaments. The homooligomerization allows the recruitment of RNF135 an E3 ubiquitin-protein ligase that activates and amplifies the RIG-I-mediated antiviral signaling in an RNA length-dependent manner through ubiquitination-dependent and -independent mechanisms. Upon activation, associates with mitochondria antiviral signaling protein (MAVS/IPS1) that activates the IKK-related kinases TBK1 and IKBKE which in turn phosphorylate the interferon regulatory factors IRF3 and IRF7, activating transcription of antiviral immunological genes including the IFN-alpha and IFN-beta interferons. Ligands include: 5'-triphosphorylated ssRNA and dsRNA and short dsRNA (&lt;1 kb in length). In addition to the 5'-triphosphate moiety, blunt-end base pairing at the 5'-end of the RNA is very essential. Overhangs at the non-triphosphorylated end of the dsRNA RNA have no major impact on its activity. A 3'overhang at the 5'triphosphate end decreases and any 5'overhang at the 5' triphosphate end abolishes its activity. Detects both positive and negative strand RNA viruses including members of the families Paramyxoviridae, Rhabdoviridae: vesicular stomatitis virus (VSV) Orthomyxoviridae: influenza A and B virus, Flaviviridae: Japanese encephalitis virus (JEV). It also detects rotavirus and reovirus. Also involved in antiviral signaling in response to viruses containing a dsDNA genome. Detects dsRNA produced from non-self dsDNA by RNA polymerase III. May play important roles in granulocyte production and differentiation, bacterial phagocytosis and in the regulation of cell migration. The sequence is that of Antiviral innate immune response receptor RIG-I from Sus scrofa (Pig).